A 430-amino-acid polypeptide reads, in one-letter code: MSFSVVILAAGQGTRMKSSLPKVLHTICGRPMIWHIIKEAQKISDDITVILYHQAEIIKEYIQKEFDGIRFVLQDHKNYPGTGGALRNIYFSNEKILVLNGDMPLIQAKTLKNFISIDADIVLSVIRMEDPCGYGRVIIKNDEVEYIVEQKDANEEELAVCNVNAGVYLFKKNLLEQFLPKLTNDNAQKEYYLTDIIALAKQHGFSIKPIFVPKNEFQGVNSKYDLANAEIVMQDRIKRHWMQQGVIMRLPQTIYIEVDVQFQGECELENGVVLRGKTLIENSHIKAHSVVENSTIRYSTIGPFARIRPQSMIQESHIGNFVEVKKSSLNGVKAGHLSYLGDATIDEGTNIGAGTITCNYDGKAKYQTIIGKNVFVGSDTQLIAPVKIEDDVLIAAGTTVTKDIPKGALAISRTPLKIVKDFYYKFFGKN.

Residues 1–223 (MSFSVVILAA…KNEFQGVNSK (223 aa)) form a pyrophosphorylase region. UDP-N-acetyl-alpha-D-glucosamine-binding positions include 8 to 11 (LAAG), Lys-22, and 81 to 82 (GT). Asp-102 contributes to the Mg(2+) binding site. UDP-N-acetyl-alpha-D-glucosamine contacts are provided by Gly-135, Glu-149, Asn-164, and Asn-221. Mg(2+) is bound at residue Asn-221. Residues 224 to 244 (YDLANAEIVMQDRIKRHWMQQ) are linker. Residues 245-430 (GVIMRLPQTI…DFYYKFFGKN (186 aa)) are N-acetyltransferase. The UDP-N-acetyl-alpha-D-glucosamine site is built by Arg-308 and Lys-325. The active-site Proton acceptor is His-336. Residues Tyr-339 and Asn-350 each coordinate UDP-N-acetyl-alpha-D-glucosamine. Acetyl-CoA-binding positions include Ala-353, 359–360 (NY), Ser-378, Ala-396, and Arg-413.

It in the N-terminal section; belongs to the N-acetylglucosamine-1-phosphate uridyltransferase family. The protein in the C-terminal section; belongs to the transferase hexapeptide repeat family. Homotrimer. The cofactor is Mg(2+).

It is found in the cytoplasm. It catalyses the reaction alpha-D-glucosamine 1-phosphate + acetyl-CoA = N-acetyl-alpha-D-glucosamine 1-phosphate + CoA + H(+). The catalysed reaction is N-acetyl-alpha-D-glucosamine 1-phosphate + UTP + H(+) = UDP-N-acetyl-alpha-D-glucosamine + diphosphate. Its pathway is nucleotide-sugar biosynthesis; UDP-N-acetyl-alpha-D-glucosamine biosynthesis; N-acetyl-alpha-D-glucosamine 1-phosphate from alpha-D-glucosamine 6-phosphate (route II): step 2/2. It functions in the pathway nucleotide-sugar biosynthesis; UDP-N-acetyl-alpha-D-glucosamine biosynthesis; UDP-N-acetyl-alpha-D-glucosamine from N-acetyl-alpha-D-glucosamine 1-phosphate: step 1/1. The protein operates within bacterial outer membrane biogenesis; LPS lipid A biosynthesis. Catalyzes the last two sequential reactions in the de novo biosynthetic pathway for UDP-N-acetylglucosamine (UDP-GlcNAc). The C-terminal domain catalyzes the transfer of acetyl group from acetyl coenzyme A to glucosamine-1-phosphate (GlcN-1-P) to produce N-acetylglucosamine-1-phosphate (GlcNAc-1-P), which is converted into UDP-GlcNAc by the transfer of uridine 5-monophosphate (from uridine 5-triphosphate), a reaction catalyzed by the N-terminal domain. The sequence is that of Bifunctional protein GlmU from Nitratiruptor sp. (strain SB155-2).